The following is a 964-amino-acid chain: SKI family transcriptional corepressor 1 (964 aa).

Disordered regions lie at residues 45–72 (TQLG…SSAL), 278–365 (RTFS…GGSA), 414–452 (AGEP…PGPG), 525–587 (AGGG…RKSS), 610–766 (REAY…GPAA), and 793–842 (YLCT…EDGL). The segment covering 283-310 (QGGGGGGANSGSGGAGKGGAGGGGGPGC) has biased composition (gly residues). Over residues 345–355 (ALGLAAAANGP) the composition is skewed to low complexity. 2 stretches are compositionally biased toward gly residues: residues 356–365 (AGPGGPGGSA) and 417–440 (PKGG…GPGA). The span at 571 to 583 (SLAPLAPPPPPPA) shows a compositional bias: pro residues. The segment covering 652 to 661 (DTADEPEVDV) has biased composition (acidic residues). Positions 798–808 (ETHEPDKEDNH) are enriched in basic and acidic residues. Polar residues predominate over residues 823–834 (DQRSVSQPSPAN). Residues 857–921 (ENLAREELQK…DTLCNELDQE (65 aa)) are a coiled coil.

This sequence belongs to the SKI family. As to quaternary structure, interacts with LBX1. Interacts with SMAD1, SMAD2 and SMAD3.

Its subcellular location is the nucleus. Inhibits BMP signaling. Acts as a transcriptional corepressor of LBX1. The chain is SKI family transcriptional corepressor 1 (Skor1) from Rattus norvegicus (Rat).